Consider the following 819-residue polypeptide: Aminopeptidase O (819 aa).

His479 provides a ligand contact to Zn(2+). The active-site Proton acceptor is Glu480. His483 and Glu502 together coordinate Zn(2+). The short motif at 689–699 (RRPRKRKRREK) is the Nucleolar localization signal element.

It belongs to the peptidase M1 family. The cofactor is Zn(2+).

It is found in the nucleus. The protein localises to the nucleolus. The protein resides in the cytoplasm. Aminopeptidase which catalyzes the hydrolysis of amino acid residues from the N-terminus of peptide or protein substrates. The protein is Aminopeptidase O of Homo sapiens (Human).